Reading from the N-terminus, the 288-residue chain is Protease HtpX (288 aa).

Transmembrane regions (helical) follow at residues 5 to 25 (IALFLATNLAVLILASIVMSL) and 34 to 54 (SGLLVMAGIFGFGGSFISLLL). A Zn(2+)-binding site is contributed by histidine 140. Glutamate 141 is an active-site residue. Zn(2+) is bound at residue histidine 144. A run of 2 helical transmembrane segments spans residues 155–175 (LLQGVLNTFVIVLARVVGGII) and 190–210 (FAYFIIVFVLEMVFGLFATMI). Residue glutamate 219 coordinates Zn(2+).

It belongs to the peptidase M48B family. It depends on Zn(2+) as a cofactor.

Its subcellular location is the cell inner membrane. The protein is Protease HtpX of Stenotrophomonas maltophilia (strain R551-3).